We begin with the raw amino-acid sequence, 946 residues long: Bifunctional glutamine synthetase adenylyltransferase/adenylyl-removing enzyme (946 aa).

Residues 1–440 (MKPLSSPLQQ…VFNELIGDDE (440 aa)) are adenylyl removase. The segment at 449-946 (SEQWRELWQD…ASWQKWLVEE (498 aa)) is adenylyl transferase.

This sequence belongs to the GlnE family. The cofactor is Mg(2+).

The catalysed reaction is [glutamine synthetase]-O(4)-(5'-adenylyl)-L-tyrosine + phosphate = [glutamine synthetase]-L-tyrosine + ADP. The enzyme catalyses [glutamine synthetase]-L-tyrosine + ATP = [glutamine synthetase]-O(4)-(5'-adenylyl)-L-tyrosine + diphosphate. Functionally, involved in the regulation of glutamine synthetase GlnA, a key enzyme in the process to assimilate ammonia. When cellular nitrogen levels are high, the C-terminal adenylyl transferase (AT) inactivates GlnA by covalent transfer of an adenylyl group from ATP to specific tyrosine residue of GlnA, thus reducing its activity. Conversely, when nitrogen levels are low, the N-terminal adenylyl removase (AR) activates GlnA by removing the adenylyl group by phosphorolysis, increasing its activity. The regulatory region of GlnE binds the signal transduction protein PII (GlnB) which indicates the nitrogen status of the cell. This is Bifunctional glutamine synthetase adenylyltransferase/adenylyl-removing enzyme from Escherichia coli O81 (strain ED1a).